The sequence spans 494 residues: Cysteine--tRNA ligase (494 aa).

Cys-29 serves as a coordination point for Zn(2+). The 'HIGH' region signature appears at 31–41; the sequence is VTVYDHCHIGH. Residues Cys-209, His-234, and Glu-238 each coordinate Zn(2+). The 'KMSKS' region signature appears at 266 to 270; that stretch reads KMSKS. Lys-269 serves as a coordination point for ATP.

It belongs to the class-I aminoacyl-tRNA synthetase family. Monomer. The cofactor is Zn(2+).

The protein localises to the cytoplasm. It carries out the reaction tRNA(Cys) + L-cysteine + ATP = L-cysteinyl-tRNA(Cys) + AMP + diphosphate. This chain is Cysteine--tRNA ligase, found in Geotalea uraniireducens (strain Rf4) (Geobacter uraniireducens).